The sequence spans 315 residues: tRNA dimethylallyltransferase (315 aa).

10–17 (GPTEVGKT) is a binding site for ATP. Residue 12–17 (TEVGKT) participates in substrate binding. Residues 35 to 38 (DSMQ) form an interaction with substrate tRNA region.

Belongs to the IPP transferase family. Monomer. Requires Mg(2+) as cofactor.

It catalyses the reaction adenosine(37) in tRNA + dimethylallyl diphosphate = N(6)-dimethylallyladenosine(37) in tRNA + diphosphate. Functionally, catalyzes the transfer of a dimethylallyl group onto the adenine at position 37 in tRNAs that read codons beginning with uridine, leading to the formation of N6-(dimethylallyl)adenosine (i(6)A). The sequence is that of tRNA dimethylallyltransferase from Geobacillus thermodenitrificans (strain NG80-2).